The chain runs to 393 residues: S-adenosylmethionine synthase (393 aa).

Residue His16 participates in ATP binding. Residue Asp18 coordinates Mg(2+). Residue Glu44 participates in K(+) binding. Residues Glu57 and Gln100 each coordinate L-methionine. Residues 100–110 form a flexible loop region; the sequence is QSNDIAQGVDQ. ATP is bound by residues 167 to 169, 238 to 239, Asp247, 253 to 254, Ala270, and Lys274; these read DAK, RF, and RK. Asp247 serves as a coordination point for L-methionine. Lys278 lines the L-methionine pocket.

The protein belongs to the AdoMet synthase family. As to quaternary structure, homotetramer; dimer of dimers. Requires Mg(2+) as cofactor. K(+) serves as cofactor.

It localises to the cytoplasm. It carries out the reaction L-methionine + ATP + H2O = S-adenosyl-L-methionine + phosphate + diphosphate. It participates in amino-acid biosynthesis; S-adenosyl-L-methionine biosynthesis; S-adenosyl-L-methionine from L-methionine: step 1/1. Catalyzes the formation of S-adenosylmethionine (AdoMet) from methionine and ATP. The overall synthetic reaction is composed of two sequential steps, AdoMet formation and the subsequent tripolyphosphate hydrolysis which occurs prior to release of AdoMet from the enzyme. This chain is S-adenosylmethionine synthase, found in Methylibium petroleiphilum (strain ATCC BAA-1232 / LMG 22953 / PM1).